The primary structure comprises 439 residues: GTPase Der (439 aa).

EngA-type G domains follow at residues 4-169 and 177-352; these read AMVS…PQEE and IKIA…EEYN. GTP-binding positions include 10-17, 57-61, 120-123, 183-190, 230-234, and 295-298; these read GRPNVGKS, DTGGL, NKVD, GKPNVGKS, DTAGI, and NKWD. The region spanning 353–437 is the KH-like domain; it reads KRITTGLLNN…PIVISTKKRG (85 aa).

It belongs to the TRAFAC class TrmE-Era-EngA-EngB-Septin-like GTPase superfamily. EngA (Der) GTPase family. Associates with the 50S ribosomal subunit.

In terms of biological role, GTPase that plays an essential role in the late steps of ribosome biogenesis. The chain is GTPase Der from Thermoanaerobacter sp. (strain X514).